Here is a 218-residue protein sequence, read N- to C-terminus: MQPSFWHDKWASQQIGFHLDEVNALLIDYWPQLELAAGSQVFVPLCGKTLDLCYLAEQGLEVIGCELNQSAVEQFFSDNELPVERQSSGEHECYRTEQVSIYQGDLFRLPKEPLEAVSGFYDRAALIAWPPEMRQQYVECLAGLLPPKSIGLLITLDYPQEALNGPPFAVSDAWIQEHMSPYFEIECLSTQDVLAENPRFVKKQVPWLTESVYRLVRR.

S-adenosyl-L-methionine is bound by residues W10, L45, E66, and R123.

This sequence belongs to the class I-like SAM-binding methyltransferase superfamily. TPMT family.

It is found in the cytoplasm. It carries out the reaction S-adenosyl-L-methionine + a thiopurine = S-adenosyl-L-homocysteine + a thiopurine S-methylether.. The protein is Thiopurine S-methyltransferase of Shewanella loihica (strain ATCC BAA-1088 / PV-4).